Reading from the N-terminus, the 320-residue chain is Membrane protein insertase YidC 2 (320 aa).

Residues 1-23 (MKNLKKKLTLTGLMTAGLLFLSG) form the signal peptide. Cys24 carries the N-palmitoyl cysteine lipid modification. A lipid anchor (S-diacylglycerol cysteine) is attached at Cys24. A run of 5 helical transmembrane segments spans residues 68–88 (YGWG…PLGL), 142–162 (MLSS…IALY), 178–198 (GIPL…LYFI), 217–237 (AMLI…PAGV), and 239–259 (LYWA…TFIM). Residues 270–320 (EFTKNPPKINNEGLKDVTPTSVQENFKEITSERNEKERKSGGRNAGKQNRK) form a disordered region. Positions 294–309 (NFKEITSERNEKERKS) are enriched in basic and acidic residues.

It belongs to the OXA1/ALB3/YidC family. Type 2 subfamily.

Its subcellular location is the cell membrane. In terms of biological role, required for the insertion and/or proper folding and/or complex formation of integral membrane proteins into the membrane. Involved in integration of membrane proteins that insert both dependently and independently of the Sec translocase complex, as well as at least some lipoproteins. The sequence is that of Membrane protein insertase YidC 2 from Lactococcus lactis subsp. lactis (strain IL1403) (Streptococcus lactis).